The primary structure comprises 557 residues: MYMLKLSYILLFLGFVKFSWQDKQVPKVSTFTGNIRGYYKKSRSDRLYEAYEGIPYAQSPVGKFRFQPPRPIKKWSKDLSATKKSSVCMQYLMTFTTHGNRVKGSEDCLYINIYVPVRNNRKPLLPVMFWIHGGAFQFASGNEANETLFMDRNIVFVAINYRLGPFGFLSTGDIVVPGNMGLKDQSMALRWVFNNIKSFGGNPNKITIFGMSAGGASVHYHYLSPMSAGLFKRGISISGVAFCPWAQTKHAPEKAKKLGALMKCRTDNTKKMIDCLQSRPARIIAQAVGDFMFWLYNPFTPFGPVVETYGSNPFISNSPINIINNGQVYDVPWISGVVSKEGLYTAAEFVDNAKLLWHLNDHWDEIAPYLLDFNYTIPLDQHRQVAKKIKNYYLRSGPINYDKVESIIQMMSDRLFNIDFEKAVRLQARINKSPVWTYYYSYRAEHSVSEILSGGSTTDYGVCHGDDIFLTLNSIISNVTKPQDLAMQQLLINFYTSFAIQGIPYIDEASWPSLNPNDPDFRYLHIVNFTNIKMEVNNNFANKSFWKTIPFNENKLN.

The N-terminal stretch at 1-21 is a signal peptide; it reads MYMLKLSYILLFLGFVKFSWQ. Residues Cys88 and Cys108 are joined by a disulfide bond. A glycan (N-linked (GlcNAc...) asparagine) is linked at Asn145. Ser212 functions as the Acyl-ester intermediate in the catalytic mechanism. A disulfide bridge connects residues Cys264 and Cys275. Residue Glu341 is the Charge relay system of the active site. A glycan (N-linked (GlcNAc...) asparagine) is linked at Asn374. Residue His464 is the Charge relay system of the active site. N-linked (GlcNAc...) asparagine glycosylation is found at Asn478, Asn528, and Asn542.

It belongs to the type-B carboxylesterase/lipase family. In terms of tissue distribution, expressed by the venom gland.

Its subcellular location is the secreted. The catalysed reaction is a carboxylic ester + H2O = an alcohol + a carboxylate + H(+). The sequence is that of Venom carboxylesterase-6 from Apis mellifera (Honeybee).